Consider the following 313-residue polypeptide: GTPase Era (313 aa).

Positions 20–187 (RSGFVALIGA…MDYLAETLPE (168 aa)) constitute an Era-type G domain. Residues 28–35 (GATNAGKS) are G1. 28 to 35 (GATNAGKS) serves as a coordination point for GTP. The interval 54–58 (QTTRA) is G2. A G3 region spans residues 75–78 (DTPG). GTP is bound by residues 75–79 (DTPGI) and 137–140 (NKVD). Positions 137–140 (NKVD) are G4. The segment at 166 to 168 (ISA) is G5. The KH type-2 domain occupies 218 to 295 (LHQELPYASH…HLFLFVKVRE (78 aa)).

This sequence belongs to the TRAFAC class TrmE-Era-EngA-EngB-Septin-like GTPase superfamily. Era GTPase family. As to quaternary structure, monomer.

Its subcellular location is the cytoplasm. The protein resides in the cell inner membrane. Functionally, an essential GTPase that binds both GDP and GTP, with rapid nucleotide exchange. Plays a role in 16S rRNA processing and 30S ribosomal subunit biogenesis and possibly also in cell cycle regulation and energy metabolism. This chain is GTPase Era, found in Rhizobium meliloti (strain 1021) (Ensifer meliloti).